The primary structure comprises 178 residues: ATP synthase subunit delta (178 aa).

It belongs to the ATPase delta chain family. As to quaternary structure, F-type ATPases have 2 components, F(1) - the catalytic core - and F(0) - the membrane proton channel. F(1) has five subunits: alpha(3), beta(3), gamma(1), delta(1), epsilon(1). F(0) has three main subunits: a(1), b(2) and c(10-14). The alpha and beta chains form an alternating ring which encloses part of the gamma chain. F(1) is attached to F(0) by a central stalk formed by the gamma and epsilon chains, while a peripheral stalk is formed by the delta and b chains.

It localises to the cell membrane. Its function is as follows. F(1)F(0) ATP synthase produces ATP from ADP in the presence of a proton or sodium gradient. F-type ATPases consist of two structural domains, F(1) containing the extramembraneous catalytic core and F(0) containing the membrane proton channel, linked together by a central stalk and a peripheral stalk. During catalysis, ATP synthesis in the catalytic domain of F(1) is coupled via a rotary mechanism of the central stalk subunits to proton translocation. In terms of biological role, this protein is part of the stalk that links CF(0) to CF(1). It either transmits conformational changes from CF(0) to CF(1) or is implicated in proton conduction. This is ATP synthase subunit delta from Mycoplasma pneumoniae (strain ATCC 29342 / M129 / Subtype 1) (Mycoplasmoides pneumoniae).